The primary structure comprises 322 residues: Cytochrome c biogenesis protein CcsA (322 aa).

Transmembrane regions (helical) follow at residues 9-29 (ILTH…LITL), 44-64 (GMIA…IYSG), 71-91 (LYES…VPYF), 98-118 (LTTI…SGLL), 143-163 (MILS…LLVI), 226-246 (VISL…VWAN), 253-273 (WSWD…AIYL), and 287-307 (AIVA…VNLL).

It belongs to the CcmF/CycK/Ccl1/NrfE/CcsA family. In terms of assembly, may interact with Ccs1.

The protein resides in the plastid. It is found in the chloroplast thylakoid membrane. Functionally, required during biogenesis of c-type cytochromes (cytochrome c6 and cytochrome f) at the step of heme attachment. The protein is Cytochrome c biogenesis protein CcsA of Helianthus annuus (Common sunflower).